The primary structure comprises 97 residues: Exodeoxyribonuclease 7 small subunit (97 aa).

The tract at residues 1 to 21 (MAKTATPGACASDPGSGPLPE) is disordered.

Belongs to the XseB family. As to quaternary structure, heterooligomer composed of large and small subunits.

The protein resides in the cytoplasm. The enzyme catalyses Exonucleolytic cleavage in either 5'- to 3'- or 3'- to 5'-direction to yield nucleoside 5'-phosphates.. Functionally, bidirectionally degrades single-stranded DNA into large acid-insoluble oligonucleotides, which are then degraded further into small acid-soluble oligonucleotides. This Burkholderia mallei (strain NCTC 10247) protein is Exodeoxyribonuclease 7 small subunit.